A 578-amino-acid chain; its full sequence is Forkhead box protein P1 (578 aa).

A C2H2-type zinc finger spans residues 208-233 (GVCKWPGCETICEDFPSFLKHLNSEH). Residues 250-271 (VQQLELQLSKDKERLQAMMSHL) form a leucine-zipper region. The ctbp1-binding stretch occupies residues 284-288 (PLNLV). Positions 293-305 (LSKTASEASPQSL) are enriched in polar residues. The segment at 293-325 (LSKTASEASPQSLPHTPTTPTAPLTPITQGPSV) is disordered. Residues 306 to 320 (PHTPTTPTAPLTPIT) show a composition bias toward low complexity. Residues 366 to 456 (RPPFTYASLI…PQKISGSPTL (91 aa)) constitute a DNA-binding region (fork-head). Residues 511–578 (MEHTSSNGSD…EDDPVNDDME (68 aa)) are disordered. Over residues 515–527 (SSNGSDSSPGRSP) the composition is skewed to low complexity. A compositionally biased stretch (acidic residues) spans 568–578 (YEDDPVNDDME).

Dimerization is required for DNA-binding. Isoform a, but not isoform b, interacts with ctbp1. As to expression, all isoforms show similar spatial expression. Localized to the animal hemisphere of early cleavage stage embryos. At tailbud stages, expressed in regions of the brain, eye and the splanchnic mesodermal layer of the lateral plate mesoderm surrounding the gut. At stage 35, expressed within the lens of the eye, in distinct regions of the head mesenchyme and in the area anterior to the gut. In the brain the anterior-most expression is restricted to the outer region of the mesencephalon. With ongoing development, additional expression is found in the curling gut.

It is found in the nucleus. Transcriptional repressor. The sequence is that of Forkhead box protein P1 from Xenopus laevis (African clawed frog).